A 174-amino-acid polypeptide reads, in one-letter code: Transcription antitermination protein NusB (174 aa).

It belongs to the NusB family.

In terms of biological role, involved in transcription antitermination. Required for transcription of ribosomal RNA (rRNA) genes. Binds specifically to the boxA antiterminator sequence of the ribosomal RNA (rrn) operons. The sequence is that of Transcription antitermination protein NusB from Rhodopseudomonas palustris (strain TIE-1).